Consider the following 571-residue polypeptide: UvrABC system protein C (571 aa).

The region spanning 15–93 (TSPGVYLWKD…IDRYNPEFNI (79 aa)) is the GIY-YIG domain. The UVR domain occupies 184–219 (NNYINELTNKMHQAANNMQFELALFLRDGLTYLKKL).

It belongs to the UvrC family. In terms of assembly, interacts with UvrB in an incision complex.

Its subcellular location is the cytoplasm. Its function is as follows. The UvrABC repair system catalyzes the recognition and processing of DNA lesions. UvrC both incises the 5' and 3' sides of the lesion. The N-terminal half is responsible for the 3' incision and the C-terminal half is responsible for the 5' incision. The sequence is that of UvrABC system protein C from Mycoplasmopsis bovis (strain ATCC 25523 / DSM 22781 / NCTC 10131 / PG45) (Mycoplasma bovis).